The chain runs to 192 residues: Probable nicotinate-nucleotide adenylyltransferase (192 aa).

Belongs to the NadD family.

The catalysed reaction is nicotinate beta-D-ribonucleotide + ATP + H(+) = deamido-NAD(+) + diphosphate. It functions in the pathway cofactor biosynthesis; NAD(+) biosynthesis; deamido-NAD(+) from nicotinate D-ribonucleotide: step 1/1. Functionally, catalyzes the reversible adenylation of nicotinate mononucleotide (NaMN) to nicotinic acid adenine dinucleotide (NaAD). In Rhizobium etli (strain CIAT 652), this protein is Probable nicotinate-nucleotide adenylyltransferase.